The chain runs to 98 residues: MSLIHINIFLAFTVSLMGLLMYRSHLMSSLLCLEGMMLSLFIMATMMVLNSHFTLAIMMPIILLVFAACEAALGLSLLVMISNTYGMDYVQNLNLLQC.

3 helical membrane passes run 1-21 (MSLI…GLLM), 29-49 (SLLC…MMVL), and 61-81 (IILL…LVMI).

The protein belongs to the complex I subunit 4L family. Core subunit of respiratory chain NADH dehydrogenase (Complex I) which is composed of 45 different subunits.

It is found in the mitochondrion inner membrane. It carries out the reaction a ubiquinone + NADH + 5 H(+)(in) = a ubiquinol + NAD(+) + 4 H(+)(out). In terms of biological role, core subunit of the mitochondrial membrane respiratory chain NADH dehydrogenase (Complex I) which catalyzes electron transfer from NADH through the respiratory chain, using ubiquinone as an electron acceptor. Part of the enzyme membrane arm which is embedded in the lipid bilayer and involved in proton translocation. This is NADH-ubiquinone oxidoreductase chain 4L (MT-ND4L) from Rhinoceros unicornis (Greater Indian rhinoceros).